Here is a 447-residue protein sequence, read N- to C-terminus: Chromosomal replication initiator protein DnaA (447 aa).

Residues 1–79 (MVSCENLWQQ…TGQEITVKLI (79 aa)) form a domain I, interacts with DnaA modulators region. The domain II stretch occupies residues 79-105 (ITDGLEPHSLIGQESSLPMETTPKNAT). Positions 106–322 (ALNGKYTFSR…GALIRAIAYT (217 aa)) are domain III, AAA+ region. Residues G150, G152, K153, and T154 each coordinate ATP. A domain IV, binds dsDNA region spans residues 323–447 (SLSNVAMTVE…INIAGQAPES (125 aa)).

This sequence belongs to the DnaA family. Oligomerizes as a right-handed, spiral filament on DNA at oriC.

It localises to the cytoplasm. Functionally, plays an essential role in the initiation and regulation of chromosomal replication. ATP-DnaA binds to the origin of replication (oriC) to initiate formation of the DNA replication initiation complex once per cell cycle. Binds the DnaA box (a 9 base pair repeat at the origin) and separates the double-stranded (ds)DNA. Forms a right-handed helical filament on oriC DNA; dsDNA binds to the exterior of the filament while single-stranded (ss)DNA is stabiized in the filament's interior. The ATP-DnaA-oriC complex binds and stabilizes one strand of the AT-rich DNA unwinding element (DUE), permitting loading of DNA polymerase. After initiation quickly degrades to an ADP-DnaA complex that is not apt for DNA replication. Binds acidic phospholipids. Isolated domain IV (residues 348-447) binds both E.coli and B.subtilis oriC. The sequence is that of Chromosomal replication initiator protein DnaA from Synechocystis sp. (strain ATCC 27184 / PCC 6803 / Kazusa).